The chain runs to 399 residues: MTKKRHLFTSESVTEGHPDKICDQISDSILDAILSKDANARVACETTVTTGLVLVAGEITTSTYVDIPKIVRETIQGIGYTRAKYGFDAETCAVLTSIDEQSADIAMGVDQALEAREGQMTDAEIEAIGAGDQGLMFGFACNETQELMPLPISLAHKLARRLTEVRKNDTLSYLRPDGKTQVTVEYDENGKPVRVDTIVISTQHHPDVTWEEIDRDLKEHVIKAVVPAELIDGETKFFINPTGRFVIGGPQGDAGLTGRKIIVDTYGGYARHGGGAFSGKDATKVDRSAAYAARYVAKNIVAAGLAEKAEVQLAYAIGVAQPVSISVDTFGTGKVSEDVLVELVRNNFDLRPAGIIKMLDLRRPIYKQTAAYGHFGRTDVDLTWERTDKAAALKEQAGL.

His17 provides a ligand contact to ATP. Asp19 lines the Mg(2+) pocket. Glu45 provides a ligand contact to K(+). 2 residues coordinate L-methionine: Glu58 and Gln101. The tract at residues 101–111 (QSADIAMGVDQ) is flexible loop. Residues 177-179 (DGK), 244-245 (RF), Asp253, 259-260 (RK), Ala276, and Lys280 each bind ATP. Residue Asp253 participates in L-methionine binding. Lys284 is a binding site for L-methionine.

Belongs to the AdoMet synthase family. In terms of assembly, homotetramer; dimer of dimers. The cofactor is Mg(2+). K(+) serves as cofactor.

It is found in the cytoplasm. It carries out the reaction L-methionine + ATP + H2O = S-adenosyl-L-methionine + phosphate + diphosphate. It participates in amino-acid biosynthesis; S-adenosyl-L-methionine biosynthesis; S-adenosyl-L-methionine from L-methionine: step 1/1. Its function is as follows. Catalyzes the formation of S-adenosylmethionine (AdoMet) from methionine and ATP. The overall synthetic reaction is composed of two sequential steps, AdoMet formation and the subsequent tripolyphosphate hydrolysis which occurs prior to release of AdoMet from the enzyme. This Bacillus thuringiensis subsp. konkukian (strain 97-27) protein is S-adenosylmethionine synthase.